The sequence spans 513 residues: ATP synthase subunit alpha (513 aa).

Position 169–176 (169–176) interacts with ATP; the sequence is GDRQTGKT.

It belongs to the ATPase alpha/beta chains family. In terms of assembly, F-type ATPases have 2 components, CF(1) - the catalytic core - and CF(0) - the membrane proton channel. CF(1) has five subunits: alpha(3), beta(3), gamma(1), delta(1), epsilon(1). CF(0) has three main subunits: a(1), b(2) and c(9-12). The alpha and beta chains form an alternating ring which encloses part of the gamma chain. CF(1) is attached to CF(0) by a central stalk formed by the gamma and epsilon chains, while a peripheral stalk is formed by the delta and b chains.

The protein localises to the cell inner membrane. It carries out the reaction ATP + H2O + 4 H(+)(in) = ADP + phosphate + 5 H(+)(out). In terms of biological role, produces ATP from ADP in the presence of a proton gradient across the membrane. The alpha chain is a regulatory subunit. The protein is ATP synthase subunit alpha of Haemophilus influenzae (strain 86-028NP).